Consider the following 476-residue polypeptide: MNSAVQAQLAELGIEGYLNQHQHKSLLRFLTCGSVDDGKSTLIGRLLHDSKQIYEDQLAAVHSDSQRVGTTGSRPDLALLVDGLQAEREQGITIDVAYRYFSTQKRKFIIADTPGHEQYTRNMATGASTCDLAVILIDARKGVLDQTRRHSFISNLLGLKHFVVAVNKMDLVEFSQQRFEEIKAEYLAFSKNLRGETDIQIIPISALEGDNVVELSQQMAWYQGPTLLEILEAVDVEKEKEAGEFRFPVQYVNRPNLDFRGFAGTISSGVVKVGDRITALPSGKSSTVARIVTFDGDLEQAQAGLAVTLTLADEIDISRGDLIVHHGANVELTNHLAADVVWMTEQPLQPGRDYDIKIAGKKTIGRVEHIHHQYDINNLSKHSAAELPLNGIGLCEWTFNESIALDNYQDCADTGGFIIIDRLTNVTVGAGMVSESLTEVTKASSDFSAFELELNALIRKHFPHWDAKDLSELLKK.

A tr-type G domain is found at 24–243 (KSLLRFLTCG…VDVEKEKEAG (220 aa)). The tract at residues 33-40 (GSVDDGKS) is G1. 33-40 (GSVDDGKS) is a binding site for GTP. The interval 91 to 95 (GITID) is G2. The tract at residues 112–115 (DTPG) is G3. Residues 112 to 116 (DTPGH) and 167 to 170 (NKMD) contribute to the GTP site. Residues 167 to 170 (NKMD) are G4. Residues 205 to 207 (SAL) form a G5 region.

Belongs to the TRAFAC class translation factor GTPase superfamily. Classic translation factor GTPase family. CysN/NodQ subfamily. In terms of assembly, heterodimer composed of CysD, the smaller subunit, and CysN.

It carries out the reaction sulfate + ATP + H(+) = adenosine 5'-phosphosulfate + diphosphate. It participates in sulfur metabolism; hydrogen sulfide biosynthesis; sulfite from sulfate: step 1/3. In terms of biological role, with CysD forms the ATP sulfurylase (ATPS) that catalyzes the adenylation of sulfate producing adenosine 5'-phosphosulfate (APS) and diphosphate, the first enzymatic step in sulfur assimilation pathway. APS synthesis involves the formation of a high-energy phosphoric-sulfuric acid anhydride bond driven by GTP hydrolysis by CysN coupled to ATP hydrolysis by CysD. This is Sulfate adenylyltransferase subunit 1 from Vibrio vulnificus (strain YJ016).